We begin with the raw amino-acid sequence, 143 residues long: CRISPR-associated endoribonuclease Cas2 (143 aa).

Asp14 is a Mg(2+) binding site.

The protein belongs to the CRISPR-associated endoribonuclease Cas2 protein family. In terms of assembly, homodimer, forms a heterotetramer with a Cas1 homodimer. Mg(2+) is required as a cofactor.

Functionally, CRISPR (clustered regularly interspaced short palindromic repeat), is an adaptive immune system that provides protection against mobile genetic elements (viruses, transposable elements and conjugative plasmids). CRISPR clusters contain sequences complementary to antecedent mobile elements and target invading nucleic acids. CRISPR clusters are transcribed and processed into CRISPR RNA (crRNA). Functions as a ssRNA-specific endoribonuclease. Involved in the integration of spacer DNA into the CRISPR cassette. This chain is CRISPR-associated endoribonuclease Cas2, found in Campylobacter jejuni subsp. jejuni serotype O:2 (strain ATCC 700819 / NCTC 11168).